The chain runs to 371 residues: Undecaprenyl-diphosphatase 1 (371 aa).

3 helical membrane-spanning segments follow: residues 53–73, 100–120, and 126–146; these read PYLA…IVAF, LAWL…LLEH, and LGRP…MLLG. The segment at 152–226 is disordered; the sequence is RSTTRGAPGP…PEAEDVTLPE (75 aa). A run of 3 helical transmembrane segments spans residues 291–311, 322–342, and 351–371; these read FAFL…LPDL, QTLF…RFLA, and TPFA…FGIF.

This sequence belongs to the UppP family.

It is found in the cell membrane. It catalyses the reaction di-trans,octa-cis-undecaprenyl diphosphate + H2O = di-trans,octa-cis-undecaprenyl phosphate + phosphate + H(+). Catalyzes the dephosphorylation of undecaprenyl diphosphate (UPP). Confers resistance to bacitracin. The protein is Undecaprenyl-diphosphatase 1 of Frankia casuarinae (strain DSM 45818 / CECT 9043 / HFP020203 / CcI3).